Reading from the N-terminus, the 371-residue chain is uncharacterized protein (371 aa).

The next 8 helical transmembrane spans lie at 4–24, 60–82, 87–109, 130–150, 197–217, 224–244, 282–302, and 320–340; these read LPML…FIYG, LIQL…ALYG, LWIV…MLSI, VFIN…FVAS, VVAV…LLPV, IYPL…YGLV, VPIW…GFHA, and FIFY…CMVG.

This sequence belongs to the peptide transporter carbon starvation (CstA) (TC 2.A.114) family.

It localises to the cell membrane. This is an uncharacterized protein from Haemophilus influenzae (strain ATCC 51907 / DSM 11121 / KW20 / Rd).